A 234-amino-acid chain; its full sequence is Thrombin-like enzyme acutin (234 aa).

Methionine 1 is a propeptide. The 224-residue stretch at 2-225 (VIGGDECDIN…YTDWIQRNIA (224 aa)) folds into the Peptidase S1 domain. Intrachain disulfides connect cysteine 8-cysteine 140, cysteine 27-cysteine 43, cysteine 75-cysteine 232, cysteine 119-cysteine 186, cysteine 151-cysteine 165, and cysteine 176-cysteine 201. Asparagine 21 carries N-linked (GlcNAc...) asparagine glycosylation. Active-site charge relay system residues include histidine 42 and aspartate 87. The Charge relay system role is filled by serine 180.

This sequence belongs to the peptidase S1 family. Snake venom subfamily. Monomer. As to expression, expressed by the venom gland.

The protein resides in the secreted. In terms of biological role, thrombin-like snake venom serine protease. Has arginyl esterase and fibrinogen clotting activities. In Deinagkistrodon acutus (Hundred-pace snake), this protein is Thrombin-like enzyme acutin.